A 218-amino-acid chain; its full sequence is Probable nicotinate-nucleotide adenylyltransferase (218 aa).

This sequence belongs to the NadD family.

The catalysed reaction is nicotinate beta-D-ribonucleotide + ATP + H(+) = deamido-NAD(+) + diphosphate. The protein operates within cofactor biosynthesis; NAD(+) biosynthesis; deamido-NAD(+) from nicotinate D-ribonucleotide: step 1/1. Its function is as follows. Catalyzes the reversible adenylation of nicotinate mononucleotide (NaMN) to nicotinic acid adenine dinucleotide (NaAD). The chain is Probable nicotinate-nucleotide adenylyltransferase from Helicobacter hepaticus (strain ATCC 51449 / 3B1).